Consider the following 250-residue polypeptide: Octanoyltransferase (250 aa).

The 182-residue stretch at 49-230 (DEINDVILVL…ALDDAFAGRL (182 aa)) folds into the BPL/LPL catalytic domain. Substrate is bound by residues 87 to 94 (RGGRITWH), 160 to 162 (ALG), and 173 to 175 (GLA). Cysteine 191 serves as the catalytic Acyl-thioester intermediate.

Belongs to the LipB family.

The protein localises to the cytoplasm. It catalyses the reaction octanoyl-[ACP] + L-lysyl-[protein] = N(6)-octanoyl-L-lysyl-[protein] + holo-[ACP] + H(+). It participates in protein modification; protein lipoylation via endogenous pathway; protein N(6)-(lipoyl)lysine from octanoyl-[acyl-carrier-protein]: step 1/2. Its function is as follows. Catalyzes the transfer of endogenously produced octanoic acid from octanoyl-acyl-carrier-protein onto the lipoyl domains of lipoate-dependent enzymes. Lipoyl-ACP can also act as a substrate although octanoyl-ACP is likely to be the physiological substrate. In Corynebacterium diphtheriae (strain ATCC 700971 / NCTC 13129 / Biotype gravis), this protein is Octanoyltransferase.